The primary structure comprises 455 residues: tRNA modification GTPase MnmE (455 aa).

Residues R23, E85, and R124 each coordinate (6S)-5-formyl-5,6,7,8-tetrahydrofolate. The region spanning 220–375 (GVSVVIAGKP…LQDAIFEAFI (156 aa)) is the TrmE-type G domain. Residue N230 participates in K(+) binding. Residues 230–235 (NVGKSS), 249–255 (TSVPGTT), and 274–277 (DTAG) each bind GTP. Position 234 (S234) interacts with Mg(2+). 3 residues coordinate K(+): T249, V251, and T254. T255 contacts Mg(2+). Residue K455 coordinates (6S)-5-formyl-5,6,7,8-tetrahydrofolate.

The protein belongs to the TRAFAC class TrmE-Era-EngA-EngB-Septin-like GTPase superfamily. TrmE GTPase family. Homodimer. Heterotetramer of two MnmE and two MnmG subunits. K(+) serves as cofactor.

The protein localises to the cytoplasm. In terms of biological role, exhibits a very high intrinsic GTPase hydrolysis rate. Involved in the addition of a carboxymethylaminomethyl (cmnm) group at the wobble position (U34) of certain tRNAs, forming tRNA-cmnm(5)s(2)U34. This Geotalea uraniireducens (strain Rf4) (Geobacter uraniireducens) protein is tRNA modification GTPase MnmE.